The primary structure comprises 188 residues: Small ribosomal subunit protein uS7 (188 aa).

Belongs to the universal ribosomal protein uS7 family. In terms of assembly, part of the 30S ribosomal subunit.

Its function is as follows. One of the primary rRNA binding proteins, it binds directly to 16S rRNA where it nucleates assembly of the head domain of the 30S subunit. Is located at the subunit interface close to the decoding center. This is Small ribosomal subunit protein uS7 from Methanococcus aeolicus (strain ATCC BAA-1280 / DSM 17508 / OCM 812 / Nankai-3).